We begin with the raw amino-acid sequence, 316 residues long: Putative phosphoribosylaminoimidazole-succinocarboxamide synthase 2 (316 aa).

This sequence belongs to the SAICAR synthetase family.

It catalyses the reaction 5-amino-1-(5-phospho-D-ribosyl)imidazole-4-carboxylate + L-aspartate + ATP = (2S)-2-[5-amino-1-(5-phospho-beta-D-ribosyl)imidazole-4-carboxamido]succinate + ADP + phosphate + 2 H(+). Its pathway is purine metabolism; IMP biosynthesis via de novo pathway; 5-amino-1-(5-phospho-D-ribosyl)imidazole-4-carboxamide from 5-amino-1-(5-phospho-D-ribosyl)imidazole-4-carboxylate: step 1/2. The protein is Putative phosphoribosylaminoimidazole-succinocarboxamide synthase 2 (purC2) of Agrobacterium fabrum (strain C58 / ATCC 33970) (Agrobacterium tumefaciens (strain C58)).